The chain runs to 740 residues: Vacuolar protein sorting-associated protein 51 homolog (740 aa).

Coiled coils occupy residues 65 to 87 (SATDTIRRMKDDFKQMETDVNLL) and 322 to 344 (RALDRLHRRLQAMRNICRGLEVQ).

Belongs to the VPS51 family. Component of the Golgi-associated retrograde protein (GARP) complex.

Its function is as follows. May act as a component of the GARP complex that is involved in retrograde transport from early and late endosomes to the trans-Golgi network (TGN). This Drosophila melanogaster (Fruit fly) protein is Vacuolar protein sorting-associated protein 51 homolog.